A 586-amino-acid polypeptide reads, in one-letter code: Protein BONZAI 2 (586 aa).

A lipid anchor (N-myristoyl glycine) is attached at glycine 2. C2 domains lie at 25 to 164 (SAAT…ALEL) and 176 to 303 (PQHN…NLAL). 4 residues coordinate Ca(2+): aspartate 62, aspartate 68, aspartate 121, and aspartate 123. The region spanning 344 to 563 (NFMVAIDFTA…SVVEALLAEL (220 aa)) is the VWFA domain.

This sequence belongs to the copine family. As to quaternary structure, interacts with BAP1 and BAP2. The cofactor is Ca(2+). In terms of tissue distribution, expressed in roots, leaves and stems. Expressed in young growing tissues.

The protein resides in the cell membrane. Negative regulator of cell death and defense responses. May repress a number of R genes and may have effects in promoting growth and development. May function in membrane trafficking and in fusion of vesicles with plasma membrane. The polypeptide is Protein BONZAI 2 (BON2) (Arabidopsis thaliana (Mouse-ear cress)).